We begin with the raw amino-acid sequence, 600 residues long: UvrABC system protein C (600 aa).

A GIY-YIG domain is found at 15–100; that stretch reads NSAGVYEYFN…IKQLHPKYNI (86 aa). The UVR domain occupies 203 to 238; sequence SVLLKNLEKQMLVLAQNENYEEAAKIRDQIATIKDL.

It belongs to the UvrC family. Interacts with UvrB in an incision complex.

It localises to the cytoplasm. In terms of biological role, the UvrABC repair system catalyzes the recognition and processing of DNA lesions. UvrC both incises the 5' and 3' sides of the lesion. The N-terminal half is responsible for the 3' incision and the C-terminal half is responsible for the 5' incision. This chain is UvrABC system protein C, found in Campylobacter jejuni subsp. doylei (strain ATCC BAA-1458 / RM4099 / 269.97).